Consider the following 89-residue polypeptide: MAHKKAGGSSRNGRDSAGRRLGVKKFGSEAVVAGNIIVRQRGTKFYPGSNVGMGKDHTLFALEDGVVRFHTGKQARKYVSVDAMAEAAE.

The segment at 1-21 (MAHKKAGGSSRNGRDSAGRRL) is disordered.

It belongs to the bacterial ribosomal protein bL27 family.

The sequence is that of Large ribosomal subunit protein bL27 from Erythrobacter litoralis (strain HTCC2594).